Reading from the N-terminus, the 488-residue chain is N-succinylglutamate 5-semialdehyde dehydrogenase (488 aa).

221–226 (GSSRTG) provides a ligand contact to NAD(+). Catalysis depends on residues Glu-244 and Cys-278.

It belongs to the aldehyde dehydrogenase family. AstD subfamily.

It carries out the reaction N-succinyl-L-glutamate 5-semialdehyde + NAD(+) + H2O = N-succinyl-L-glutamate + NADH + 2 H(+). It participates in amino-acid degradation; L-arginine degradation via AST pathway; L-glutamate and succinate from L-arginine: step 4/5. Its function is as follows. Catalyzes the NAD-dependent reduction of succinylglutamate semialdehyde into succinylglutamate. The protein is N-succinylglutamate 5-semialdehyde dehydrogenase of Pseudomonas syringae pv. tomato (strain ATCC BAA-871 / DC3000).